The sequence spans 370 residues: Acyl-CoA:lysophosphatidylglycerol acyltransferase 1 (370 aa).

The helical transmembrane segment at 22-42 (FAFMVANNLVAIPSYICYVII) threads the bilayer. Positions 101 to 106 (HQATGD) match the HXXXXD motif motif. The helical transmembrane segment at 342 to 362 (MWIFLIQSFAFLSGYLWYHII) threads the bilayer.

It belongs to the 1-acyl-sn-glycerol-3-phosphate acyltransferase family. In terms of tissue distribution, ubiquitous. Expressed in heart, kidney, liver, skin, intestine, and thymus. Highest expression is detected in brain and testis.

The protein resides in the endoplasmic reticulum membrane. It catalyses the reaction a 2-acyl-sn-glycero-3-phosphoethanolamine + octadecanoyl-CoA = 1-octadecanoyl-2-acyl-sn-glycero-3-phosphoethanolamine + CoA. The enzyme catalyses 2-(9Z-octadecenoyl)-sn-glycero-3-phosphoethanolamine + octadecanoyl-CoA = 1-octadecanoyl-2-(9Z-octadecenoyl)-sn-glycero-3-phosphoethanolamine + CoA. The catalysed reaction is a 2-acyl-sn-glycero-3-phosphoethanolamine + hexadecanoyl-CoA = 1-hexadecanoyl-2-acyl-sn-glycero-3-phosphoethanolamine + CoA. It carries out the reaction 2-(9Z-octadecenoyl)-sn-glycero-3-phosphoethanolamine + hexadecanoyl-CoA = 1-hexadecanoyl-2-(9Z-octadecenoyl)-sn-glycero-3-phosphoethanolamine + CoA. It catalyses the reaction 1-tetradecanoyl-sn-glycero-3-phospho-(1'-sn-glycerol) + hexadecanoyl-CoA = 1-tetradecanoyl-2-hexadecanoyl-sn-glycero-3-phospho-(1'-sn-glycerol) + CoA. The enzyme catalyses 1-hexadecanoyl-sn-glycero-3-phospho-(1'-sn-glycerol) + dodecanoyl-CoA = 1-hexadecanoyl-2-dodecanoyl-sn-glycero-3-phospho-(1'-sn-glycerol) + CoA. The catalysed reaction is 1-hexadecanoyl-sn-glycero-3-phospho-(1'-sn-glycerol) + hexadecanoyl-CoA = 1,2-dihexadecanoyl-sn-glycero-3-phospho-(1'-sn-glycerol) + CoA. It carries out the reaction 1-hexadecanoyl-sn-glycero-3-phospho-(1'-sn-glycerol) + octadecanoyl-CoA = 1-hexadecanoyl-2-octadecanoyl-sn-glycero-3-phospho-(1'-sn-glycerol) + CoA. It catalyses the reaction 1-octadecanoyl-sn-glycero-3-phospho-(1'-sn-glycerol) + hexadecanoyl-CoA = 1-octadecanoyl-2-hexadecanoyl-sn-glycero-3-phospho-(1'-sn-glycerol) + CoA. The enzyme catalyses 1-(9Z-octadecenoyl)-sn-glycero-3-phospho-(1'-sn-glycerol) + dodecanoyl-CoA = 1-(9Z-octadecenoyl)-2-dodecanoyl-sn-glycero-3-phospho-(1'-sn-glycerol) + CoA. The catalysed reaction is 1-hexadecanoyl-sn-glycero-3-phospho-(1'-sn-glycerol) + (9Z)-octadecenoyl-CoA = 1-hexadecanoyl-2-(9Z-octadecenoyl)-sn-glycero-3-phospho-(1'-sn-glycerol) + CoA. It carries out the reaction 1-(9Z-octadecenoyl)-sn-glycero-3-phospho-(1'-sn-glycerol) + hexadecanoyl-CoA = 1-(9Z-octadecenoyl)-2-hexadecanoyl-sn-glycero-3-phospho-(1'-sn-glycerol) + CoA. It catalyses the reaction 1-(9Z-octadecenoyl)-sn-glycero-3-phospho-(1'-sn-glycerol) + (9Z)-octadecenoyl-CoA = 1,2-di-(9Z-octadecenoyl)-sn-glycero-3-phospho-(1'-sn-glycerol) + CoA. The enzyme catalyses a 2-acylglycerol + an acyl-CoA = a 1,2-diacylglycerol + CoA. The catalysed reaction is a 2-acylglycerol + hexadecanoyl-CoA = a 1-hexadecanoyl-2-acylglycerol + CoA. It carries out the reaction a 1-acylglycerol + hexadecanoyl-CoA = an hexadecanoyl-acylglycerol + CoA. It catalyses the reaction a 2-acyl-sn-glycero-3-phosphocholine + an acyl-CoA = a 1,2-diacyl-sn-glycero-3-phosphocholine + CoA. The enzyme catalyses 2-(9Z-octadecenoyl)-sn-glycero-3-phosphocholine + octadecanoyl-CoA = 1-octadecanoyl-2-(9Z-octadecenoyl)-sn-glycero-3-phosphocholine + CoA. The catalysed reaction is 2-(9Z,12Z-octadecadienoyl)-sn-glycero-3-phosphocholine + octadecanoyl-CoA = 1-octadecanoyl-2-(9Z,12Z)-octadecadienoyl-sn-glycero-3-phosphocholine + CoA. It carries out the reaction 2-(5Z,8Z,11Z,14Z)-eicosatetraenoyl-sn-glycero-3-phosphocholine + octadecanoyl-CoA = 1-octadecanoyl-2-(5Z,8Z,11Z,14Z-eicosatetraenoyl)-sn-glycero-3-phosphocholine + CoA. It catalyses the reaction 2-(9Z-octadecenoyl)-sn-glycero-3-phosphocholine + hexadecanoyl-CoA = 1-hexadecanoyl-2-(9Z-octadecenoyl)-sn-glycero-3-phosphocholine + CoA. The enzyme catalyses 2-(9Z-octadecenoyl)-sn-glycero-3-phospho-L-serine + hexadecanoyl-CoA = 1-hexadecanoyl-2-(9Z-octadecenoyl)-sn-glycero-3-phospho-L-serine + CoA. The catalysed reaction is 2-(4Z,7Z,10Z,13Z,16Z,19Z-docosahexaenoyl)-sn-glycero-3-phosphocholine + octadecanoyl-CoA = 1-octadecanoyl-2-(4Z,7Z,10Z,13Z,16Z,19Z-docosahexaenoyl)-sn-glycero-3-phosphocholine + CoA. It carries out the reaction 1-(9Z-octadecenoyl)-sn-glycero-3-phospho-L-serine + octadecanoyl-CoA = 1-(9Z-octadecenoyl)-2-octadecanoyl-sn-glycero-3-phospho-L-serine + CoA. It catalyses the reaction a 2-acyl-sn-glycero-3-phosphoethanolamine + a fatty acyl-CoA = a 1,2-diacyl-sn-glycero-3-phosphoethanolamine + CoA. Lysophospholipid acyltransferase involved in fatty acyl chain remodeling of glycerophospholipids in the endoplasmic reticulum membrane. Selectively catalyzes the transfer and esterification of saturated long-chain fatty acids from acyl-CoA to the sn-1 position of 1-lyso-2-acyl phosphatidylethanolamines (1-lyso-PE, LPE), with a preference for stearoyl CoA over palmitoyl CoA as acyl donor. Acts in concert with an unknown phospholipase A1 to convert palmitate PE species into stearate ones. Provides substrates to the PE methylation pathway, controlling stearate/palmitate composition of PE and phosphatidylcholine (PC) species with an overall impact on de novo hepatic lipid synthesis, body fat content and life span. Can acylate lysophosphatidylglycerols (LPG) using various saturated fatty acyl-CoAs as acyl donors. Can also acylate monoacylglycerols with a preference for 2-monoacylglycerols over 1-monoacylglycerols. Has no activity toward lysophosphatidic acids (LPA) and lysophosphatidylcholines (LPC). The polypeptide is Acyl-CoA:lysophosphatidylglycerol acyltransferase 1 (Mus musculus (Mouse)).